Reading from the N-terminus, the 675-residue chain is Electrogenic aspartate/glutamate antiporter SLC25A13, mitochondrial (675 aa).

Ala-2 is modified (N-acetylalanine). Positions 2-295 are regulatory N-terminal domain; it reads AAAKVALTKR…TLADIERIAP (294 aa). At 2 to 331 the chain is on the mitochondrial intermembrane side; that stretch reads AAAKVALTKR…LLQVAESAYR (330 aa). EF-hand domains are found at residues 51–86, 87–122, 125–157, and 158–193; these read SQPN…SVLC, APDA…TTIH, IPFN…FLLE, and IQLE…IRPH. Residues Asp-66, Thr-68, Asp-70, Leu-72, and Glu-77 each coordinate Ca(2+). Residues 296-311 are linker loop domain; the sequence is LEEGTLPFNLAEAQRQ. The segment at 321-612 is carrier domain; the sequence is VLLQVAESAY…LQRWFYIDFG (292 aa). Solcar repeat units follow at residues 326-418, 426-510, and 518-606; these read AESA…VRDK, VPLA…VKAS, and VSPG…LQRW. Residues 332–349 traverse the membrane as a helical segment; the sequence is FGLGSVAGAVGATAVYPI. Residues 350-392 lie on the Mitochondrial matrix side of the membrane; the sequence is DLVKTRMQNQRSTGSFVGELMYKNSFDCFKKVLRYEGFFGLYR. Lys-353 and Lys-372 each carry N6-acetyllysine. A helical transmembrane segment spans residues 393 to 412; that stretch reads GLLPQLLGVAPEKAIKLTVN. Over 413–435 the chain is Mitochondrial intermembrane; that stretch reads DFVRDKFMHKDGSVPLAAEILAG. Residues 436 to 449 form a helical membrane-spanning segment; that stretch reads GCAGGSQVIFTNPL. At 450-484 the chain is on the mitochondrial matrix side; the sequence is EIVKIRLQVAGEITTGPRVSALSVVRDLGFFGIYK. The residue at position 453 (Lys-453) is an N6-methyllysine. Residue Lys-484 is modified to N6-acetyllysine; alternate. Lys-484 is subject to N6-succinyllysine; alternate. The chain crosses the membrane as a helical span at residues 485-504; that stretch reads GAKACFLRDIPFSAIYFPCY. Residues 505-523 lie on the Mitochondrial intermembrane side of the membrane; sequence AHVKASFANEDGQVSPGSL. Residues 524 to 541 form a helical membrane-spanning segment; the sequence is LLAGAIAGMPAASLVTPA. Topologically, residues 542 to 580 are mitochondrial matrix; the sequence is DVIKTRLQVAARAGQTTYSGVIDCFRKILREEGPKALWK. Position 580 is an N6-succinyllysine (Lys-580). The helical transmembrane segment at 581–600 threads the bilayer; the sequence is GAGARVFRSSPQFGVTLLTY. Residues 601–675 are Mitochondrial intermembrane-facing; that stretch reads ELLQRWFYID…STSKAIGGGP (75 aa). The interval 613–675 is C-terminal domain; the sequence is GVKPMGSEPV…STSKAIGGGP (63 aa). Position 662 is an N6-acetyllysine (Lys-662). Position 666 is a phosphoserine (Ser-666).

It belongs to the mitochondrial carrier (TC 2.A.29) family. In terms of assembly, homodimer (via N-terminus). As to expression, high levels in liver and low levels in kidney, pancreas, placenta, heart and brain.

It is found in the mitochondrion inner membrane. The catalysed reaction is L-aspartate(in) + L-glutamate(out) + H(+)(out) = L-aspartate(out) + L-glutamate(in) + H(+)(in). The enzyme catalyses 3-sulfino-L-alanine(out) + L-glutamate(in) + H(+)(in) = 3-sulfino-L-alanine(in) + L-glutamate(out) + H(+)(out). It catalyses the reaction 3-sulfino-L-alanine(out) + L-aspartate(in) = 3-sulfino-L-alanine(in) + L-aspartate(out). Its activity is regulated as follows. Activated by calcium-binding in the mitochondrial intermembrane space. Inhibited by pyridoxal 5'-phosphate, bathophenathroline, mercurials, diethyl pyrocarbonate and N-ethylmaleimide. In terms of biological role, mitochondrial electrogenic aspartate/glutamate antiporter that favors efflux of aspartate and entry of glutamate and proton within the mitochondria as part of the malate-aspartate shuttle. Also mediates the uptake of L-cysteinesulfinate (3-sulfino-L-alanine) by mitochondria in exchange of L-glutamate and proton. Can also exchange L-cysteinesulfinate with aspartate in their anionic form without any proton translocation. Lacks transport activity towards gamma-aminobutyric acid (GABA). In Homo sapiens (Human), this protein is Electrogenic aspartate/glutamate antiporter SLC25A13, mitochondrial.